A 338-amino-acid polypeptide reads, in one-letter code: D-xylulose reductase (338 aa).

Zn(2+) contacts are provided by Cys40, His65, and Glu151.

This sequence belongs to the zinc-containing alcohol dehydrogenase family. In terms of assembly, homotetramer. Zn(2+) serves as cofactor.

The enzyme catalyses xylitol + NAD(+) = D-xylulose + NADH + H(+). The sequence is that of D-xylulose reductase from Morganella morganii (Proteus morganii).